A 230-amino-acid chain; its full sequence is Ephrin-A3 (230 aa).

A signal peptide spans Met1–Ala22. The Ephrin RBD domain maps to Gly30–Ser161. N-linked (GlcNAc...) asparagine glycans are attached at residues Asn38, Asn67, Asn84, and Asn92. 2 disulfides stabilise this stretch: Cys63-Cys102 and Cys91-Cys150. Gly206 carries GPI-anchor amidated glycine lipidation. Residues Thr207–Ser230 constitute a propeptide, removed in mature form.

It belongs to the ephrin family. Interacts with EPHA8; activates EPHA8. In terms of tissue distribution, expressed in myogenic progenitor cells.

It localises to the cell membrane. Cell surface GPI-bound ligand for Eph receptors, a family of receptor tyrosine kinases which are crucial for migration, repulsion and adhesion during neuronal, vascular and epithelial development. Binds promiscuously Eph receptors residing on adjacent cells, leading to contact-dependent bidirectional signaling into neighboring cells. The signaling pathway downstream of the receptor is referred to as forward signaling while the signaling pathway downstream of the ephrin ligand is referred to as reverse signaling. The protein is Ephrin-A3 (Efna3) of Mus musculus (Mouse).